We begin with the raw amino-acid sequence, 327 residues long: Cytochrome f (327 aa).

The N-terminal stretch at 1–24 (MKRIYLALCALLLLLGTGSRPAAA) is a signal peptide. Residues Tyr-25, Cys-45, Cys-48, and His-49 each contribute to the heme site. Residues 293–313 (VKWLVAFLAAVAITQLLLVLK) form a helical membrane-spanning segment.

Belongs to the cytochrome f family. In terms of assembly, the 4 large subunits of the cytochrome b6-f complex are cytochrome b6, subunit IV (17 kDa polypeptide, PetD), cytochrome f and the Rieske protein, while the 4 small subunits are PetG, PetL, PetM and PetN. The complex functions as a dimer. Heme serves as cofactor.

It localises to the cellular thylakoid membrane. Functionally, component of the cytochrome b6-f complex, which mediates electron transfer between photosystem II (PSII) and photosystem I (PSI), cyclic electron flow around PSI, and state transitions. This is Cytochrome f from Synechococcus sp. (strain JA-3-3Ab) (Cyanobacteria bacterium Yellowstone A-Prime).